The following is a 95-amino-acid chain: Co-chaperonin GroES (95 aa).

This sequence belongs to the GroES chaperonin family. As to quaternary structure, heptamer of 7 subunits arranged in a ring. Interacts with the chaperonin GroEL.

The protein localises to the cytoplasm. In terms of biological role, together with the chaperonin GroEL, plays an essential role in assisting protein folding. The GroEL-GroES system forms a nano-cage that allows encapsulation of the non-native substrate proteins and provides a physical environment optimized to promote and accelerate protein folding. GroES binds to the apical surface of the GroEL ring, thereby capping the opening of the GroEL channel. The sequence is that of Co-chaperonin GroES from Marinobacter nauticus (strain ATCC 700491 / DSM 11845 / VT8) (Marinobacter aquaeolei).